A 447-amino-acid polypeptide reads, in one-letter code: Biotin carboxylase (447 aa).

The Biotin carboxylation domain maps to 1–447 (MKFDKILIAN…STSFVQEMNK (447 aa)). ATP is bound by residues K117, K159, 165–166 (GG), 201–204 (EKFI), and H209. One can recognise an ATP-grasp domain in the interval 121–318 (KETMQKAGVP…LLVEQIRIAQ (198 aa)). Residue K238 coordinates hydrogencarbonate. ATP is bound by residues E276 and E289. Mg(2+) is bound by residues E276, E289, and N291. Mn(2+) contacts are provided by E276, E289, and N291. R293, V296, and R339 together coordinate hydrogencarbonate. R293 is a catalytic residue. R339 is a binding site for biotin.

Acetyl-CoA carboxylase is a heterohexamer of biotin carboxyl carrier protein, biotin carboxylase and the two subunits of carboxyl transferase in a 2:2 complex. Mg(2+) is required as a cofactor. The cofactor is Mn(2+).

It carries out the reaction N(6)-biotinyl-L-lysyl-[protein] + hydrogencarbonate + ATP = N(6)-carboxybiotinyl-L-lysyl-[protein] + ADP + phosphate + H(+). Its pathway is lipid metabolism; malonyl-CoA biosynthesis; malonyl-CoA from acetyl-CoA: step 1/1. This protein is a component of the acetyl coenzyme A carboxylase complex; first, biotin carboxylase catalyzes the carboxylation of the carrier protein and then the transcarboxylase transfers the carboxyl group to form malonyl-CoA. This Nostoc sp. (strain PCC 7120 / SAG 25.82 / UTEX 2576) protein is Biotin carboxylase (accC).